The following is an 88-amino-acid chain: Conotoxin VxVIB (88 aa).

Residues 1–22 (MNLACVLIVAVLFLTASQLATA) form the signal peptide. Positions 23-52 (ASYARDKQEYPAVRSSDEMQDSEDLTLTKE) are excised as a propeptide. 3 disulfide bridges follow: Cys-53–Cys-68, Cys-60–Cys-72, and Cys-67–Cys-81.

Expressed by the venom duct.

Its subcellular location is the secreted. Its function is as follows. May act as a neurotoxin, but produces no obvious effect on ionic currents when tested on the mouse dorsal rooted ganglia (DRG). The protein is Conotoxin VxVIB of Conus vexillum (Flag cone).